A 98-amino-acid chain; its full sequence is MWARVLLLGVLLSLLADLHAASGGDAGGQKTWNPRISDCELPPEKGPCNNLELRWFYNLKSKRCERFFYGGCYGNANNFKEINECDRRCVSPDINKPG.

The signal sequence occupies residues 1-23 (MWARVLLLGVLLSLLADLHAASG). The region spanning 39 to 89 (CELPPEKGPCNNLELRWFYNLKSKRCERFFYGGCYGNANNFKEINECDRRC) is the BPTI/Kunitz inhibitor domain. 3 disulfide bridges follow: C39-C89, C48-C72, and C64-C85.

It belongs to the venom Kunitz-type family. In terms of tissue distribution, expressed by the venom gland.

The protein resides in the secreted. Functionally, serine protease inhibitor. The polypeptide is Kunitz-type serine protease inhibitor kunitoxin-Phi1 (Philodryas olfersii (Green snake)).